The sequence spans 110 residues: Phosphoribosyl-ATP pyrophosphatase (110 aa).

It belongs to the PRA-PH family.

The protein localises to the cytoplasm. The catalysed reaction is 1-(5-phospho-beta-D-ribosyl)-ATP + H2O = 1-(5-phospho-beta-D-ribosyl)-5'-AMP + diphosphate + H(+). It participates in amino-acid biosynthesis; L-histidine biosynthesis; L-histidine from 5-phospho-alpha-D-ribose 1-diphosphate: step 2/9. The sequence is that of Phosphoribosyl-ATP pyrophosphatase from Clostridium botulinum (strain Kyoto / Type A2).